Consider the following 365-residue polypeptide: GTPase Obg (365 aa).

The Obg domain occupies 2-160; that stretch reads ESFVDEVAIE…KFLRLSLKLL (159 aa). The region spanning 161-329 is the OBG-type G domain; sequence ADVGIVGLPN…LLEAMDEAFF (169 aa). GTP contacts are provided by residues 167–174, 192–196, 215–218, 282–285, and 310–312; these read GLPNAGKS, FTTLS, DIPG, NKID, and SAD. Mg(2+) contacts are provided by Ser-174 and Thr-194.

Belongs to the TRAFAC class OBG-HflX-like GTPase superfamily. OBG GTPase family. As to quaternary structure, monomer. Requires Mg(2+) as cofactor.

It is found in the cytoplasm. Its function is as follows. An essential GTPase which binds GTP, GDP and possibly (p)ppGpp with moderate affinity, with high nucleotide exchange rates and a fairly low GTP hydrolysis rate. Plays a role in control of the cell cycle, stress response, ribosome biogenesis and in those bacteria that undergo differentiation, in morphogenesis control. This chain is GTPase Obg, found in Leptospira borgpetersenii serovar Hardjo-bovis (strain JB197).